Reading from the N-terminus, the 247-residue chain is Small ribosomal subunit protein uS2 (247 aa).

This sequence belongs to the universal ribosomal protein uS2 family.

The polypeptide is Small ribosomal subunit protein uS2 (Cupriavidus taiwanensis (strain DSM 17343 / BCRC 17206 / CCUG 44338 / CIP 107171 / LMG 19424 / R1) (Ralstonia taiwanensis (strain LMG 19424))).